A 677-amino-acid polypeptide reads, in one-letter code: DNA ligase (677 aa).

NAD(+) contacts are provided by residues 36-40 (DAEYD), 85-86 (SI), and glutamate 122. Catalysis depends on lysine 124, which acts as the N6-AMP-lysine intermediate. Arginine 145, glutamate 181, lysine 298, and lysine 322 together coordinate NAD(+). The Zn(2+) site is built by cysteine 416, cysteine 419, cysteine 434, and cysteine 440. The 78-residue stretch at 600–677 (LTPRPLAGKT…DEAALRALLD (78 aa)) folds into the BRCT domain.

This sequence belongs to the NAD-dependent DNA ligase family. LigA subfamily. It depends on Mg(2+) as a cofactor. Mn(2+) is required as a cofactor.

It catalyses the reaction NAD(+) + (deoxyribonucleotide)n-3'-hydroxyl + 5'-phospho-(deoxyribonucleotide)m = (deoxyribonucleotide)n+m + AMP + beta-nicotinamide D-nucleotide.. Its function is as follows. DNA ligase that catalyzes the formation of phosphodiester linkages between 5'-phosphoryl and 3'-hydroxyl groups in double-stranded DNA using NAD as a coenzyme and as the energy source for the reaction. It is essential for DNA replication and repair of damaged DNA. The sequence is that of DNA ligase from Methylibium petroleiphilum (strain ATCC BAA-1232 / LMG 22953 / PM1).